Consider the following 860-residue polypeptide: Glucans biosynthesis glucosyltransferase H (860 aa).

A run of 6 helical transmembrane segments spans residues 141–161, 187–207, 515–535, 572–592, 599–619, and 682–702; these read FILL…MKGI, VLPY…FCWV, VFLT…FLVL, LFST…MLIW, FGGV…SVLL, and FLWW…VSVI.

It belongs to the glycosyltransferase 2 family. OpgH subfamily.

The protein resides in the cell inner membrane. It participates in glycan metabolism; osmoregulated periplasmic glucan (OPG) biosynthesis. In terms of biological role, involved in the biosynthesis of osmoregulated periplasmic glucans (OPGs). The polypeptide is Glucans biosynthesis glucosyltransferase H (Pseudomonas paraeruginosa (strain DSM 24068 / PA7) (Pseudomonas aeruginosa (strain PA7))).